A 354-amino-acid chain; its full sequence is Ferrochelatase (354 aa).

Positions 204 and 306 each coordinate Fe cation.

This sequence belongs to the ferrochelatase family.

The protein resides in the cytoplasm. The catalysed reaction is heme b + 2 H(+) = protoporphyrin IX + Fe(2+). It participates in porphyrin-containing compound metabolism; protoheme biosynthesis; protoheme from protoporphyrin-IX: step 1/1. In terms of biological role, catalyzes the ferrous insertion into protoporphyrin IX. The chain is Ferrochelatase from Coxiella burnetii (strain CbuK_Q154) (Coxiella burnetii (strain Q154)).